The primary structure comprises 456 residues: Bifunctional protein GlmU (456 aa).

The tract at residues 1-229 (MLNSAMSVVI…LSEVEGVNNR (229 aa)) is pyrophosphorylase. Residues 11-14 (LAAG), Lys-25, Gln-76, 81-82 (GT), 103-105 (YGD), Gly-140, Glu-154, Asn-169, and Asn-227 each bind UDP-N-acetyl-alpha-D-glucosamine. Asp-105 contributes to the Mg(2+) binding site. Asn-227 contacts Mg(2+). The linker stretch occupies residues 230-250 (LQLSALERIYQREQADKLLLA). The N-acetyltransferase stretch occupies residues 251–456 (GVMLLDPARF…SGWQRPVKKK (206 aa)). Residues Arg-333 and Lys-351 each coordinate UDP-N-acetyl-alpha-D-glucosamine. His-363 functions as the Proton acceptor in the catalytic mechanism. Tyr-366 and Asn-377 together coordinate UDP-N-acetyl-alpha-D-glucosamine. Residues Ala-380, 386 to 387 (NY), Ser-405, Ala-423, and Arg-440 contribute to the acetyl-CoA site.

In the N-terminal section; belongs to the N-acetylglucosamine-1-phosphate uridyltransferase family. It in the C-terminal section; belongs to the transferase hexapeptide repeat family. As to quaternary structure, homotrimer. Mg(2+) is required as a cofactor.

It is found in the cytoplasm. The catalysed reaction is alpha-D-glucosamine 1-phosphate + acetyl-CoA = N-acetyl-alpha-D-glucosamine 1-phosphate + CoA + H(+). It carries out the reaction N-acetyl-alpha-D-glucosamine 1-phosphate + UTP + H(+) = UDP-N-acetyl-alpha-D-glucosamine + diphosphate. Its pathway is nucleotide-sugar biosynthesis; UDP-N-acetyl-alpha-D-glucosamine biosynthesis; N-acetyl-alpha-D-glucosamine 1-phosphate from alpha-D-glucosamine 6-phosphate (route II): step 2/2. It functions in the pathway nucleotide-sugar biosynthesis; UDP-N-acetyl-alpha-D-glucosamine biosynthesis; UDP-N-acetyl-alpha-D-glucosamine from N-acetyl-alpha-D-glucosamine 1-phosphate: step 1/1. The protein operates within bacterial outer membrane biogenesis; LPS lipid A biosynthesis. Its function is as follows. Catalyzes the last two sequential reactions in the de novo biosynthetic pathway for UDP-N-acetylglucosamine (UDP-GlcNAc). The C-terminal domain catalyzes the transfer of acetyl group from acetyl coenzyme A to glucosamine-1-phosphate (GlcN-1-P) to produce N-acetylglucosamine-1-phosphate (GlcNAc-1-P), which is converted into UDP-GlcNAc by the transfer of uridine 5-monophosphate (from uridine 5-triphosphate), a reaction catalyzed by the N-terminal domain. This chain is Bifunctional protein GlmU, found in Pectobacterium atrosepticum (strain SCRI 1043 / ATCC BAA-672) (Erwinia carotovora subsp. atroseptica).